Consider the following 120-residue polypeptide: Holo-[acyl-carrier-protein] synthase (120 aa).

2 residues coordinate Mg(2+): aspartate 8 and glutamate 60.

It belongs to the P-Pant transferase superfamily. AcpS family. Requires Mg(2+) as cofactor.

The protein localises to the cytoplasm. It carries out the reaction apo-[ACP] + CoA = holo-[ACP] + adenosine 3',5'-bisphosphate + H(+). Functionally, transfers the 4'-phosphopantetheine moiety from coenzyme A to a Ser of acyl-carrier-protein. This is Holo-[acyl-carrier-protein] synthase from Anaplasma marginale (strain St. Maries).